We begin with the raw amino-acid sequence, 315 residues long: Probable inactive acetaldehyde dehydrogenase 1 (315 aa).

NAD(+)-binding positions include 14 to 17 (SGDV) and Asn-288.

Belongs to the acetaldehyde dehydrogenase family.

This Mycolicibacterium vanbaalenii (strain DSM 7251 / JCM 13017 / BCRC 16820 / KCTC 9966 / NRRL B-24157 / PYR-1) (Mycobacterium vanbaalenii) protein is Probable inactive acetaldehyde dehydrogenase 1.